Reading from the N-terminus, the 709-residue chain is Threonine--tRNA ligase, mitochondrial 1 (709 aa).

A mitochondrion-targeting transit peptide spans 1 to 21 (MLLRLTARSIRRFTTSSSSLP). Residues 73 to 135 (DPIKVTLPDG…EGDCKLELFK (63 aa)) enclose the TGS domain. Zn(2+) is bound by residues cysteine 407, histidine 458, and histidine 584.

The protein belongs to the class-II aminoacyl-tRNA synthetase family.

The protein resides in the mitochondrion. The protein localises to the cytoplasm. It localises to the cytosol. The catalysed reaction is tRNA(Thr) + L-threonine + ATP = L-threonyl-tRNA(Thr) + AMP + diphosphate + H(+). The chain is Threonine--tRNA ligase, mitochondrial 1 from Arabidopsis thaliana (Mouse-ear cress).